Consider the following 214-residue polypeptide: Holliday junction branch migration complex subunit RuvA (214 aa).

A domain I region spans residues 1–63 (MISSLRGTVL…EDSLTLFGFP (63 aa)). The interval 64 to 139 (GPDELRAFEL…KLFVTQPRTR (76 aa)) is domain II. Residues 139-143 (RSASS) form a flexible linker region. The domain III stretch occupies residues 144–214 (AASTVTADVV…APAAAQAADR (71 aa)).

The protein belongs to the RuvA family. Homotetramer. Forms an RuvA(8)-RuvB(12)-Holliday junction (HJ) complex. HJ DNA is sandwiched between 2 RuvA tetramers; dsDNA enters through RuvA and exits via RuvB. An RuvB hexamer assembles on each DNA strand where it exits the tetramer. Each RuvB hexamer is contacted by two RuvA subunits (via domain III) on 2 adjacent RuvB subunits; this complex drives branch migration. In the full resolvosome a probable DNA-RuvA(4)-RuvB(12)-RuvC(2) complex forms which resolves the HJ.

Its subcellular location is the cytoplasm. In terms of biological role, the RuvA-RuvB-RuvC complex processes Holliday junction (HJ) DNA during genetic recombination and DNA repair, while the RuvA-RuvB complex plays an important role in the rescue of blocked DNA replication forks via replication fork reversal (RFR). RuvA specifically binds to HJ cruciform DNA, conferring on it an open structure. The RuvB hexamer acts as an ATP-dependent pump, pulling dsDNA into and through the RuvAB complex. HJ branch migration allows RuvC to scan DNA until it finds its consensus sequence, where it cleaves and resolves the cruciform DNA. The chain is Holliday junction branch migration complex subunit RuvA from Clavibacter sepedonicus (Clavibacter michiganensis subsp. sepedonicus).